Consider the following 174-residue polypeptide: Co-chaperone protein HscB (174 aa).

The J domain occupies 2-74 (DYFTLFGLPA…LKRAEYMLSL (73 aa)).

The protein belongs to the HscB family. In terms of assembly, interacts with HscA and stimulates its ATPase activity. Interacts with IscU.

In terms of biological role, co-chaperone involved in the maturation of iron-sulfur cluster-containing proteins. Seems to help targeting proteins to be folded toward HscA. This is Co-chaperone protein HscB from Yersinia pseudotuberculosis serotype O:1b (strain IP 31758).